A 377-amino-acid polypeptide reads, in one-letter code: MGPAARPALRSPPPPPPPPPSPLLLLLPLLPLWLGLAGPGAAADGSEPAAGAGRGGARAVRVDVRLPRQDALVLEGVRIGSEADPAPLLGGRLLLMDIVDAEQEAPVEGWIAVAYVGKEQAAQFHQENKGSGPQAYPKALVQQMRRALFLGASALLLLILNHNVVRELDISQLLLRPVIVLHYSSNVTKLLDALLQRTQATAEITSGESLSANIEWKLTLWTTCGLSKDGYGGWQDLVCLGGSRAQEQKPLQQLWNAILLVAMLLCTGLVVQAQRQASRQSQRELGGQVDLFKRRVVRRLASLKTRRCRLSRAAQGLPDPGAETCAVCLDYFCNKQWLRVLPCKHEFHRDCVDPWLMLQQTCPLCKFNVLGNRYSDD.

Over 1–22 (MGPAARPALRSPPPPPPPPPSP) the chain is Cytoplasmic. Positions 1–22 (MGPAARPALRSPPPPPPPPPSP) are disordered. Residues 10 to 22 (RSPPPPPPPPPSP) are compositionally biased toward pro residues. A helical membrane pass occupies residues 23-43 (LLLLLPLLPLWLGLAGPGAAA). The Extracellular portion of the chain corresponds to 44–250 (DGSEPAAGAG…GGSRAQEQKP (207 aa)). Asn-186 is a glycosylation site (N-linked (GlcNAc...) asparagine). The chain crosses the membrane as a helical span at residues 251 to 271 (LQQLWNAILLVAMLLCTGLVV). At 272 to 377 (QAQRQASRQS…NVLGNRYSDD (106 aa)) the chain is on the cytoplasmic side. Residues 325–366 (CAVCLDYFCNKQWLRVLPCKHEFHRDCVDPWLMLQQTCPLCK) form an RING-type; atypical zinc finger.

Its subcellular location is the membrane. The sequence is that of RING finger protein 215 (RNF215) from Homo sapiens (Human).